We begin with the raw amino-acid sequence, 361 residues long: Zygote arrest protein 1 (361 aa).

Disordered stretches follow at residues 1–23 (MFPA…AGDG), 98–128 (QPAG…PRSW), and 148–252 (VAGG…EQDK). Residue Thr-154 is modified to Phosphothreonine; by CDK1. Ser-161 carries the post-translational modification Phosphoserine; by CDK1. Residues 168-177 (REPEPREVAA) show a composition bias toward basic and acidic residues. A 3CxxC-type zinc finger spans residues 263 to 346 (KYGYYHCKDC…RQDLCGRCKD (84 aa)).

Belongs to the ZAR1 family. Interacts with YBX2. Post-translationally, phosphorylation by CDK1 does not regulate formation of MARDO (mitochondria-associated ribonucleoprotein domain) membraneless compartment. Ubiquitinated and degradaded by the proteasome during oocyte meiotic maturation, leading to MARDO (mitochondria-associated ribonucleoprotein domain) membraneless compartment dissolution. As to expression, ovary. Expressed in primary oocytes (from primary through antral follicle stages) and during the progression from Meiosis I to Meiosis II. The mRNA is detected in growing oocytes (early primary follicle, type 3a) through fully grown oocytes (antral follicle, type 8).

The protein localises to the cytoplasm. It localises to the cytoplasmic ribonucleoprotein granule. Its function is as follows. mRNA-binding protein that mediates formation of MARDO (mitochondria-associated ribonucleoprotein domain), a membraneless compartment that stores maternal mRNAs in oocytes. MARDO assembly around mitochondria is directed by an increase in mitochondrial membrane potential during oocyte growth. Promotes formation of MARDO phase-separated membraneless compartment by undergoing liquid-liquid phase separation upon binding to maternal mRNAs. Binds to the 3'-UTR of maternal mRNAs. Maternal mRNAs stored in the MARDO are translationally repressed. Essential for female fertility and oocyte-to-embryo transition by coordinating maternal mRNA storage, translation and degradation. This chain is Zygote arrest protein 1, found in Mus musculus (Mouse).